Reading from the N-terminus, the 301-residue chain is Phosducin-like protein (301 aa).

Thr2 is subject to N-acetylthreonine. The segment at Tyr15–Ile53 is disordered. Phosphoserine is present on residues Ser20, Ser25, Ser226, Ser293, and Ser296. The Phosducin domain maps to Leu37 to Glu299. The interval Phe158 to Asp301 is thioredoxin fold.

The protein belongs to the phosducin family. As to quaternary structure, forms a complex with the beta and gamma subunits of the GTP-binding protein, transducin. Interacts with the CCT chaperonin complex.

It localises to the cell projection. The protein resides in the cilium. Its function is as follows. Functions as a co-chaperone for CCT in the assembly of heterotrimeric G protein complexes, facilitates the assembly of both Gbeta-Ggamma and RGS-Gbeta5 heterodimers. Also acts as a positive regulator of hedgehog signaling and regulates ciliary function. The protein is Phosducin-like protein (PDCL) of Bos taurus (Bovine).